A 547-amino-acid chain; its full sequence is Large cysteine-rich periplasmic protein OmcB, serovar E (547 aa).

Positions 1–22 (MNKLIRRAVTIFAVTSVASLFA) are cleaved as a signal peptide. Positions 23-40 (SGVLETSMAESLSTNVIS) are excised as a propeptide. Residues 46 to 83 (AKDNTSHKSKKARKNHSKETLVDRKEVAPVHESKATGP) form a disordered region. Residues 52–61 (HKSKKARKNH) are compositionally biased toward basic residues. The segment covering 62 to 79 (SKETLVDRKEVAPVHESK) has biased composition (basic and acidic residues).

In terms of assembly, part of a disulfide cross-linked outer membrane complex (COMC) composed of the major outer membrane porin (MOMP), the small cysteine-rich protein (OmcA) and the large cysteine-rich periplasmic protein (OmcB).

It is found in the periplasm. Its function is as follows. In elementary bodies (EBs, the infectious stage, which is able to survive outside the host cell) provides the structural integrity of the outer envelope through disulfide cross-links with the small cysteine-rich protein and the major outer membrane protein. It has been described in publications as the Sarkosyl-insoluble COMC (Chlamydia outer membrane complex), and serves as the functional equivalent of peptidoglycan. This chain is Large cysteine-rich periplasmic protein OmcB, serovar E (omcB), found in Chlamydia trachomatis.